Consider the following 222-residue polypeptide: 7-cyano-7-deazaguanine synthase (222 aa).

11–21 serves as a coordination point for ATP; sequence FSGGQDSTTCL. Zn(2+) contacts are provided by Cys187, Cys195, Cys198, and Cys201.

This sequence belongs to the QueC family. Zn(2+) is required as a cofactor.

The enzyme catalyses 7-carboxy-7-deazaguanine + NH4(+) + ATP = 7-cyano-7-deazaguanine + ADP + phosphate + H2O + H(+). The protein operates within purine metabolism; 7-cyano-7-deazaguanine biosynthesis. Functionally, catalyzes the ATP-dependent conversion of 7-carboxy-7-deazaguanine (CDG) to 7-cyano-7-deazaguanine (preQ(0)). This Actinobacillus pleuropneumoniae serotype 3 (strain JL03) protein is 7-cyano-7-deazaguanine synthase.